We begin with the raw amino-acid sequence, 432 residues long: Benzoyl-CoA reductase subunit B (432 aa).

It belongs to the FldB/FldC dehydratase alpha/beta subunit family. Heterotetramer composed of A, B, C, and D subunits. Iron-sulfur cluster is required as a cofactor. The cofactor is an oxidized flavin.

The enzyme catalyses cyclohexa-1,5-diene-1-carbonyl-CoA + oxidized 2[4Fe-4S]-[ferredoxin] + 2 ADP + 2 phosphate = reduced 2[4Fe-4S]-[ferredoxin] + benzoyl-CoA + 2 ATP + 2 H2O. It catalyses the reaction 3-hydroxybenzoyl-CoA + AH2 + 2 ATP + 2 H2O = 3-hydroxycyclohexa-1,5-diene-1-carbonyl-CoA + A + 2 ADP + 2 phosphate + 2 H(+). Its function is as follows. Catalyzes the anaerobic reduction of benzoyl-CoA and 3-hydroxybenzoyl-CoA to form cyclohexa-1,5-diene-1-carbonyl-CoA and 3-hydroxycyclohexa-1,5-diene-1-carbonyl-CoA, respectively. The enzyme also reduces other benzoyl-CoA analogs with small substituents at the aromatic ring. This chain is Benzoyl-CoA reductase subunit B (bcrB), found in Thauera aromatica.